We begin with the raw amino-acid sequence, 1209 residues long: Phospholipid-transporting ATPase ID (1209 aa).

Residues 1–68 lie on the Cytoplasmic side of the membrane; the sequence is MTVPKEIPEK…NIVTFLPVNL (68 aa). Residues 12–36 form a disordered region; that stretch reads ARAGAPPSWSQKKPSWGTEEERRAR. Residues 69-89 form a helical membrane-spanning segment; the sequence is FEQFQEVANTYFLFLLILQLI. Topologically, residues 90-91 are exoplasmic loop; it reads PQ. A helical transmembrane segment spans residues 92-112; sequence ISSLSWFTTIVPLVLVLTITA. Topologically, residues 113–295 are cytoplasmic; sequence VKDATDDYFR…TSIDRLMNTL (183 aa). A helical transmembrane segment spans residues 296–316; it reads VLWIFGFLVCMGVILAIGNAI. The Exoplasmic loop segment spans residues 317-338; that stretch reads WEHEVGTRFQVYLPWDEAVDSA. The helical transmembrane segment at 339–359 threads the bilayer; that stretch reads FFSGFLSFWSYIIILNTVVPI. At 360 to 898 the chain is on the cytoplasmic side; sequence SLYVSVEVIR…KFLCYFFYKN (539 aa). Residue aspartate 411 is the 4-aspartylphosphate intermediate of the active site. ATP is bound by residues aspartate 411, lysine 412, threonine 413, glutamate 515, phenylalanine 556, lysine 579, arginine 613, threonine 693, glycine 694, aspartate 695, arginine 807, and lysine 813. Residue aspartate 411 participates in Mg(2+) binding. Residue threonine 413 participates in Mg(2+) binding. Mg(2+) is bound at residue aspartate 833. Asparagine 836 and aspartate 837 together coordinate ATP. A Mg(2+)-binding site is contributed by aspartate 837. Residues 899–919 form a helical membrane-spanning segment; the sequence is FAFTMVHFWFGFFCGFSAQTV. Topologically, residues 920 to 922 are exoplasmic loop; the sequence is YDQ. Residues 923–943 traverse the membrane as a helical segment; it reads YFITLYNIVYTSLPVLAMGVF. At 944 to 972 the chain is on the cytoplasmic side; sequence DQDVPEQRSMEYPKLYEPGQLNLLFNKRE. A helical transmembrane segment spans residues 973–993; it reads FFICIAQGIYTSVLMFFIPYG. Residues 994–1011 are Exoplasmic loop-facing; sequence VFAEATRDDGTQLADYQS. The chain crosses the membrane as a helical span at residues 1012-1032; that stretch reads FAVTVATSLVIVVSVQIGLDT. Residues 1033–1036 lie on the Cytoplasmic side of the membrane; that stretch reads GYWT. A helical membrane pass occupies residues 1037–1057; the sequence is AINHFFIWGSLAVYFAILFAM. Topologically, residues 1058-1082 are exoplasmic loop; it reads HSNGLFDMFPNQFRFVGNAQNTLAQ. The chain crosses the membrane as a helical span at residues 1083-1103; the sequence is PTVWLTIALTTAVCIMPVVAF. At 1104 to 1209 the chain is on the cytoplasmic side; that stretch reads RFLRLSLKPD…SGGAEKPLKG (106 aa). Position 1175 is a phosphoserine (serine 1175). Residues 1179–1209 form a disordered region; it reads RSSSSWIESLRRKKSDSANSPSGGAEKPLKG.

It belongs to the cation transport ATPase (P-type) (TC 3.A.3) family. Type IV subfamily. As to quaternary structure, component of a P4-ATPase flippase complex which consists of a catalytic alpha subunit ATP8B2 and an accessory beta subunit TMEM30A or TMEM30B. Mg(2+) serves as cofactor. As to expression, expressed in brain and testes (at protein level).

The protein localises to the cell membrane. Its subcellular location is the endoplasmic reticulum membrane. The catalysed reaction is ATP + H2O + phospholipidSide 1 = ADP + phosphate + phospholipidSide 2.. It carries out the reaction a 1,2-diacyl-sn-glycero-3-phosphocholine(out) + ATP + H2O = a 1,2-diacyl-sn-glycero-3-phosphocholine(in) + ADP + phosphate + H(+). Functionally, catalytic component of P4-ATPase flippase complex, which catalyzes the hydrolysis of ATP coupled to the transport of phosphatidylcholine (PC) from the outer to the inner leaflet of the plasma membrane. May contribute to the maintenance of membrane lipid asymmetry. The polypeptide is Phospholipid-transporting ATPase ID (Mus musculus (Mouse)).